A 102-amino-acid chain; its full sequence is Large ribosomal subunit protein bL21 (102 aa).

Belongs to the bacterial ribosomal protein bL21 family. Part of the 50S ribosomal subunit. Contacts protein L20.

Its function is as follows. This protein binds to 23S rRNA in the presence of protein L20. In Finegoldia magna (strain ATCC 29328 / DSM 20472 / WAL 2508) (Peptostreptococcus magnus), this protein is Large ribosomal subunit protein bL21.